The sequence spans 766 residues: Exocyst complex component 6 (766 aa).

The stretch at 28–90 forms a coiled coil; it reads NTKQIGDQLE…SLDTSLRQIS (63 aa).

The protein belongs to the SEC15 family. In terms of assembly, the exocyst complex is composed of Sec3/Exoc1, Sec5/Exoc2, Sec6/Exoc3, Sec8/Exoc4, Sec10/Exoc5, Sec15/Exoc6, Exo70/Exoc7 and Exo84/Exoc8. Interacts with RAB3, RAB8, RAB11 and RAB27. As to expression, detected in developing rhabdomeres in photoreceptor cells.

It localises to the cell projection. Its subcellular location is the rhabdomere. Its function is as follows. Component of the exocyst complex involved in the docking of exocytic vesicles with fusion sites on the plasma membrane. The protein is Exocyst complex component 6 of Drosophila melanogaster (Fruit fly).